A 317-amino-acid polypeptide reads, in one-letter code: AT-hook motif nuclear-localized protein 22 (317 aa).

2 disordered regions span residues 22 to 41 (HHQF…HDID) and 48 to 106 (LKRD…KPPI). Positions 26–35 (QHQQQQQQQN) are enriched in low complexity. The span at 48–64 (LKRDRDADIDPNEHSSA) shows a compositional bias: basic and acidic residues. Gly residues predominate over residues 72-84 (GSGGESGGGGGGD). The segment at residues 89 to 101 (RRPRGRPAGSKNK) is a DNA-binding region (a.T hook). Residues 113-253 (ANALKSHVME…EDDQEEQTAG (141 aa)) form the PPC domain. Positions 258 to 285 (NIDGNATMGGGTQTQTQTQQQQQQQLMQ) are disordered. Low complexity predominate over residues 270–282 (QTQTQTQQQQQQQ).

Homodimer. Interacts with HDA1/HDA19, HDA6 and HDA9. In terms of tissue distribution, expressed at the hypocotyl-root transition zone and the root hair zone. Also detected in the inflorescence.

It localises to the nucleus. Functionally, transcription factor that specifically binds AT-rich DNA sequences related to the nuclear matrix attachment regions (MARs). Binds an AT-rich DNA sequences in the FLOWERING LOCUS T (FT) promoter. Acts redundantly with AHL18, AHL27 and AHL29 in the regulation of flowering and regulation of the hypocotyl elongation. Plays a role in both photo- and skotomorphogenesis. Acts as a chromatin remodeling factor that modifies the architecture of FLOWERING LOCUS T (FT) chromatin by modulating both H3 acetylation and methylation leading to the regulation of FT expression during flowering induction. The chain is AT-hook motif nuclear-localized protein 22 from Arabidopsis thaliana (Mouse-ear cress).